Reading from the N-terminus, the 123-residue chain is Small ribosomal subunit protein uS12c (123 aa).

The protein belongs to the universal ribosomal protein uS12 family. In terms of assembly, part of the 30S ribosomal subunit.

The protein resides in the plastid. It is found in the chloroplast. With S4 and S5 plays an important role in translational accuracy. Located at the interface of the 30S and 50S subunits. This Anthoceros angustus (Hornwort) protein is Small ribosomal subunit protein uS12c (rps12).